We begin with the raw amino-acid sequence, 261 residues long: tRNA 5-carboxymethoxyuridine methyltransferase (261 aa).

S-adenosyl-L-methionine contacts are provided by residues R26, 52–53 (GG), D73, 102–103 (AQ), and H119.

This sequence belongs to the class I-like SAM-binding methyltransferase superfamily. CmoM family.

The catalysed reaction is 5-carboxymethoxyuridine(34) in tRNA + S-adenosyl-L-methionine = 5-methoxycarbonylmethoxyuridine(34) in tRNA + S-adenosyl-L-homocysteine. In terms of biological role, catalyzes the methylation of 5-carboxymethoxyuridine (cmo5U) to form 5-methoxycarbonylmethoxyuridine (mcmo5U) at position 34 in tRNAs. Four tRNAs (tRNA(Ala1), tRNA(Ser1), tRNA(Pro3) and tRNA(Thr4)) are fully modified with mcmo5U in stationary-phase E.coli. Also present at low frequency in tRNA(Leu3) and tRNA(Val1). The chain is tRNA 5-carboxymethoxyuridine methyltransferase from Escherichia coli (strain K12).